Consider the following 234-residue polypeptide: Leucyl/phenylalanyl-tRNA--protein transferase (234 aa).

This sequence belongs to the L/F-transferase family.

Its subcellular location is the cytoplasm. The enzyme catalyses N-terminal L-lysyl-[protein] + L-leucyl-tRNA(Leu) = N-terminal L-leucyl-L-lysyl-[protein] + tRNA(Leu) + H(+). The catalysed reaction is N-terminal L-arginyl-[protein] + L-leucyl-tRNA(Leu) = N-terminal L-leucyl-L-arginyl-[protein] + tRNA(Leu) + H(+). It carries out the reaction L-phenylalanyl-tRNA(Phe) + an N-terminal L-alpha-aminoacyl-[protein] = an N-terminal L-phenylalanyl-L-alpha-aminoacyl-[protein] + tRNA(Phe). Its function is as follows. Functions in the N-end rule pathway of protein degradation where it conjugates Leu, Phe and, less efficiently, Met from aminoacyl-tRNAs to the N-termini of proteins containing an N-terminal arginine or lysine. The polypeptide is Leucyl/phenylalanyl-tRNA--protein transferase (Salmonella gallinarum (strain 287/91 / NCTC 13346)).